The primary structure comprises 640 residues: Choline O-acetyltransferase (640 aa).

Residues 1–22 are compositionally biased toward basic and acidic residues; it reads MPDLEKDMQKKEKDSRSKDEPA. A disordered region spans residues 1–28; that stretch reads MPDLEKDMQKKEKDSRSKDEPAVPKLPV. H334 (proton acceptor) is an active-site residue. Residues 412-424, S450, and Q551 each bind CoA; that span reads GKEF…TSPD.

Belongs to the carnitine/choline acetyltransferase family. As to expression, detected in brain and in embryonic retina.

The enzyme catalyses choline + acetyl-CoA = acetylcholine + CoA. Functionally, catalyzes the reversible synthesis of acetylcholine (ACh) from acetyl CoA and choline at cholinergic synapses. The polypeptide is Choline O-acetyltransferase (CHAT) (Gallus gallus (Chicken)).